The sequence spans 333 residues: tRNA dimethylallyltransferase (333 aa).

An ATP-binding site is contributed by 16–23; it reads GPTASGKT. A substrate-binding site is contributed by 18-23; the sequence is TASGKT. 3 interaction with substrate tRNA regions span residues 41-44, 165-169, and 253-258; these read DSAL, QRISR, and RCVGYR.

The protein belongs to the IPP transferase family. As to quaternary structure, monomer. It depends on Mg(2+) as a cofactor.

It carries out the reaction adenosine(37) in tRNA + dimethylallyl diphosphate = N(6)-dimethylallyladenosine(37) in tRNA + diphosphate. Catalyzes the transfer of a dimethylallyl group onto the adenine at position 37 in tRNAs that read codons beginning with uridine, leading to the formation of N6-(dimethylallyl)adenosine (i(6)A). This chain is tRNA dimethylallyltransferase, found in Polaromonas sp. (strain JS666 / ATCC BAA-500).